Reading from the N-terminus, the 544-residue chain is Chaperonin GroEL (544 aa).

ATP is bound by residues 30 to 33 (TLGP), K51, 87 to 91 (DGTTT), G415, 481 to 483 (DAL), and D497.

This sequence belongs to the chaperonin (HSP60) family. In terms of assembly, forms a cylinder of 14 subunits composed of two heptameric rings stacked back-to-back. Interacts with the co-chaperonin GroES.

The protein localises to the cytoplasm. It catalyses the reaction ATP + H2O + a folded polypeptide = ADP + phosphate + an unfolded polypeptide.. Together with its co-chaperonin GroES, plays an essential role in assisting protein folding. The GroEL-GroES system forms a nano-cage that allows encapsulation of the non-native substrate proteins and provides a physical environment optimized to promote and accelerate protein folding. The protein is Chaperonin GroEL of Chlamydia trachomatis serovar L2 (strain ATCC VR-902B / DSM 19102 / 434/Bu).